The sequence spans 247 residues: MNIIPCSIKTLKGLYDISGVEVGQHFYWQIGGFQIHAQVLITSWVVITILLGSVVIAVRNPQTIPTDGQNFFEYVLEFIRDLSKTQIGEEYGPWVPFIGTMFLFIFVSNWSGALLPWKIIELPHGELAAPTNDINTTVALALLTSAAYFYAGLSKKGLSYFEKYIKPTPILLPINILEDFTKPLSLSFRLFGNILADELVVVVLVSLVPLVIPIPVMFLGLFTSGIQALIFATLAAAYIGESMEGHH.

5 helical membrane-spanning segments follow: residues 38 to 58 (QVLI…VIAV), 95 to 115 (VPFI…GALL), 134 to 154 (INTT…AGLS), 199 to 219 (LVVV…VMFL), and 220 to 240 (GLFT…AYIG).

It belongs to the ATPase A chain family. F-type ATPases have 2 components, CF(1) - the catalytic core - and CF(0) - the membrane proton channel. CF(1) has five subunits: alpha(3), beta(3), gamma(1), delta(1), epsilon(1). CF(0) has four main subunits: a, b, b' and c.

It localises to the plastid. The protein resides in the chloroplast thylakoid membrane. Functionally, key component of the proton channel; it plays a direct role in the translocation of protons across the membrane. This is ATP synthase subunit a, chloroplastic from Hordeum vulgare (Barley).